We begin with the raw amino-acid sequence, 298 residues long: 4-hydroxy-tetrahydrodipicolinate synthase (298 aa).

Thr51 lines the pyruvate pocket. Tyr139 (proton donor/acceptor) is an active-site residue. The Schiff-base intermediate with substrate role is filled by Lys167. Ile209 serves as a coordination point for pyruvate.

Belongs to the DapA family. In terms of assembly, homotetramer; dimer of dimers.

Its subcellular location is the cytoplasm. The catalysed reaction is L-aspartate 4-semialdehyde + pyruvate = (2S,4S)-4-hydroxy-2,3,4,5-tetrahydrodipicolinate + H2O + H(+). The protein operates within amino-acid biosynthesis; L-lysine biosynthesis via DAP pathway; (S)-tetrahydrodipicolinate from L-aspartate: step 3/4. In terms of biological role, catalyzes the condensation of (S)-aspartate-beta-semialdehyde [(S)-ASA] and pyruvate to 4-hydroxy-tetrahydrodipicolinate (HTPA). This chain is 4-hydroxy-tetrahydrodipicolinate synthase, found in Haemophilus influenzae (strain PittEE).